The chain runs to 210 residues: GTP pyrophosphokinase YwaC (210 aa).

The protein belongs to the RelA/SpoT family. In terms of assembly, homotetramer.

The catalysed reaction is GTP + ATP = guanosine 3'-diphosphate 5'-triphosphate + AMP. It functions in the pathway purine metabolism; ppGpp biosynthesis; ppGpp from GTP: step 1/2. Its function is as follows. Functions as a (p)ppGpp synthase; GDP can be used instead of GTP, resulting in an increase of (p)ppGpp synthesis. Overexpression in relA mutants (triple relA-yjbM-ywaC deletions and single relA deletions) leads to growth arrest; GTP levels fall drastically, various guanine-related nucleotides are synthesized (ppGp or pGpp), the cellular transcriptional profile changes dramatically and 70S ribosome dimerization occurs. Overexpression in the presence of a wild-type relA gene does not have these effects. In eubacteria ppGpp (guanosine 3'-diphosphate 5'-diphosphate) is a mediator of the stringent response that coordinates a variety of cellular activities in response to changes in nutritional abundance. activities in response to changes in nutritional abundance. YwaC has probably a minor role in stringent response. This chain is GTP pyrophosphokinase YwaC (ywaC), found in Bacillus subtilis (strain 168).